A 158-amino-acid polypeptide reads, in one-letter code: Transcription elongation factor GreA (158 aa).

Belongs to the GreA/GreB family.

In terms of biological role, necessary for efficient RNA polymerase transcription elongation past template-encoded arresting sites. The arresting sites in DNA have the property of trapping a certain fraction of elongating RNA polymerases that pass through, resulting in locked ternary complexes. Cleavage of the nascent transcript by cleavage factors such as GreA or GreB allows the resumption of elongation from the new 3'terminus. GreA releases sequences of 2 to 3 nucleotides. This Macrococcus caseolyticus (strain JCSC5402) (Macrococcoides caseolyticum) protein is Transcription elongation factor GreA.